Here is a 440-residue protein sequence, read N- to C-terminus: D-serine dehydratase (440 aa).

An N6-(pyridoxal phosphate)lysine modification is found at Lys-116.

The protein belongs to the serine/threonine dehydratase family. DsdA subfamily. In terms of assembly, monomer. Pyridoxal 5'-phosphate is required as a cofactor.

It carries out the reaction D-serine = pyruvate + NH4(+). In Salmonella paratyphi A (strain ATCC 9150 / SARB42), this protein is D-serine dehydratase.